The following is a 78-amino-acid chain: MICOS complex subunit MIC10 (78 aa).

Serine 2 is subject to N-acetylserine. A helical membrane pass occupies residues 17–36; that stretch reads AVVKIGTGFGLGIVFSLTFF. The Mitochondrial intermembrane segment spans residues 37–78; sequence KRRMWPLAFGSGMGLGMAYSNCQHDFQAPYLLHGKYVKEQEQ.

This sequence belongs to the MICOS complex subunit Mic10 family. Component of the mitochondrial contact site and cristae organizing system (MICOS) complex, composed of at least MICOS10/MIC10, CHCHD3/MIC19, CHCHD6/MIC25, APOOL/MIC27, IMMT/MIC60, APOO/MIC23/MIC26 and MICOS13/MIC13. This complex was also known under the names MINOS or MitOS complex. The MICOS complex associates with mitochondrial outer membrane proteins SAMM50, MTX1 and MTX2 (together described as components of the mitochondrial outer membrane sorting assembly machinery (SAM) complex) and DNAJC11, mitochondrial inner membrane protein TMEM11 and with HSPA9. The MICOS and SAM complexes together with DNAJC11 are part of a large protein complex spanning both membranes termed the mitochondrial intermembrane space bridging (MIB) complex. Interacts with IMMT/MIC60 and MICOS13/MIC13. Interacts with APOO/MIC23/MIC26 and APOOL/MIC27. Interacts with ARMC1.

Its subcellular location is the mitochondrion inner membrane. Component of the MICOS complex, a large protein complex of the mitochondrial inner membrane that plays crucial roles in the maintenance of crista junctions, inner membrane architecture, and formation of contact sites to the outer membrane. This Homo sapiens (Human) protein is MICOS complex subunit MIC10.